Reading from the N-terminus, the 306-residue chain is Prophage bactoprenol glucosyl transferase homolog (306 aa).

Residues 1–227 (MKISLVVPVF…ITSFSTFPLR (227 aa)) lie on the Cytoplasmic side of the membrane. A helical transmembrane segment spans residues 228-248 (IWTYIGLVVASVAFIYGAWMI). The Periplasmic segment spans residues 249 to 262 (LDTIIFGNAVRGYP). The chain crosses the membrane as a helical span at residues 263–283 (SLLVSILFLGGIQMIGIGVLG). The Cytoplasmic segment spans residues 284–306 (EYIGRTYIETKKRPKYIIKRVKK).

It belongs to the glycosyltransferase 2 family. GtrB subfamily.

It localises to the cell inner membrane. Its function is as follows. Involved in O antigen modification. Catalyzes the transfer of the glucose residue from UDP-glucose to a lipid carrier. This chain is Prophage bactoprenol glucosyl transferase homolog (yfdH), found in Escherichia coli (strain K12).